We begin with the raw amino-acid sequence, 347 residues long: DNA-directed RNA polymerase subunit alpha (347 aa).

Residues 1-230 (MFKGFQKPKR…DHMTIFINFE (230 aa)) form an alpha N-terminal domain (alpha-NTD) region. The tract at residues 247 to 347 (MNEVLNRSVE…EDDGQDQIGE (101 aa)) is alpha C-terminal domain (alpha-CTD). A disordered region spans residues 320 to 347 (GRLVAPPPSAGGGPDFGPEDDGQDQIGE). The segment covering 336-347 (GPEDDGQDQIGE) has biased composition (acidic residues).

Belongs to the RNA polymerase alpha chain family. As to quaternary structure, homodimer. The RNAP catalytic core consists of 2 alpha, 1 beta, 1 beta' and 1 omega subunit. When a sigma factor is associated with the core the holoenzyme is formed, which can initiate transcription.

The enzyme catalyses RNA(n) + a ribonucleoside 5'-triphosphate = RNA(n+1) + diphosphate. DNA-dependent RNA polymerase catalyzes the transcription of DNA into RNA using the four ribonucleoside triphosphates as substrates. In Solibacter usitatus (strain Ellin6076), this protein is DNA-directed RNA polymerase subunit alpha.